The chain runs to 411 residues: Imidazolonepropionase (411 aa).

The Fe(3+) site is built by H78 and H80. Zn(2+)-binding residues include H78 and H80. 4-imidazolone-5-propanoate is bound by residues R87, Y150, and H183. Y150 is a binding site for N-formimidoyl-L-glutamate. H248 provides a ligand contact to Fe(3+). H248 is a binding site for Zn(2+). Position 251 (Q251) interacts with 4-imidazolone-5-propanoate. D322 contributes to the Fe(3+) binding site. D322 lines the Zn(2+) pocket. Residues N324 and G326 each coordinate N-formimidoyl-L-glutamate. S327 serves as a coordination point for 4-imidazolone-5-propanoate.

It belongs to the metallo-dependent hydrolases superfamily. HutI family. Zn(2+) serves as cofactor. Requires Fe(3+) as cofactor.

It localises to the cytoplasm. It catalyses the reaction 4-imidazolone-5-propanoate + H2O = N-formimidoyl-L-glutamate. Its pathway is amino-acid degradation; L-histidine degradation into L-glutamate; N-formimidoyl-L-glutamate from L-histidine: step 3/3. In terms of biological role, catalyzes the hydrolytic cleavage of the carbon-nitrogen bond in imidazolone-5-propanoate to yield N-formimidoyl-L-glutamate. It is the third step in the universal histidine degradation pathway. The sequence is that of Imidazolonepropionase from Flavobacterium johnsoniae (strain ATCC 17061 / DSM 2064 / JCM 8514 / BCRC 14874 / CCUG 350202 / NBRC 14942 / NCIMB 11054 / UW101) (Cytophaga johnsonae).